The primary structure comprises 565 residues: MGGRLNDLIQVAYGGKNVILSMMKNKTRQTSSVFINNLNSLNNNNNNISLKDKFKDLKDLKDNLNEKKINNDNDDDDEDNLIFDEKKDFLNENKNPELNYIKSKGHKIPSSQTSRFWEFTKLAVGVGAGFLGEKTKRTIDSSSSSSSPSSSYSAIFTDTNAERMAESFSRMRGAALKIGQVLSIQDESFLPPKFVEILDRVRKNANPIPLEQLYNTMSNELGENWRSKFQLFQDDPIAAASIGQVHRAITLDGKEVAVKVQYPGVADSITSDIKNLSSLLKMIVPETAYIEKSLESARSELLLETDYLNEASNQLKFKSLLESSINSGTNGSFKYLKDLYVPNVIMELTTKRILTTEFVHGTSIDKITIENHNQETRDWISKNILSLCLAELFEFNFMQVDPNWTNFVVDFENKRINLLDFGACRNYKSEFLFNYLKSIEGGVNRDINQILEYSLKLGYLTGDENKQMNDAQAKSILILSEPFSKLYYKENNLKTYPFNEKQIAKRISQLIPTMLKNRLKPPPEETYSLHRKLSGCYLVCSKLKSNINSTLIFNHFKNIFYKNYK.

Residues 44–77 (NNNNISLKDKFKDLKDLKDNLNEKKINNDNDDDD) adopt a coiled-coil conformation. A Protein kinase domain is found at 231–565 (LFQDDPIAAA…FKNIFYKNYK (335 aa)). ATP contacts are provided by residues 237–245 (IAAASIGQV) and Lys259. The active-site Proton acceptor is the Asp401.

It belongs to the protein kinase superfamily. ADCK protein kinase family.

This chain is Probable serine/threonine-protein kinase abkA (abkA), found in Dictyostelium discoideum (Social amoeba).